Here is a 189-residue protein sequence, read N- to C-terminus: MPDPLDPSDSSTGLPSDDQVLELLAPEFSRSGVEIESVVVSDGGVAGRPSRIAVVVDSDTPVDLDAVAGLSRTASALLDEADTGWQAYELEITTPGVDRPLTTVAHFRRAHLRLAQIRLTNGEDLLGRIGITHDDGVQVVLRKPIKGTGWTVRDLAFSDIESAVVQVEFNTPNPQELNLAGAAETGGGA.

Belongs to the RimP family.

It localises to the cytoplasm. Functionally, required for maturation of 30S ribosomal subunits. The protein is Ribosome maturation factor RimP of Mycobacteroides abscessus (strain ATCC 19977 / DSM 44196 / CCUG 20993 / CIP 104536 / JCM 13569 / NCTC 13031 / TMC 1543 / L948) (Mycobacterium abscessus).